The chain runs to 467 residues: 26S proteasome regulatory subunit 7 homolog (467 aa).

Disordered regions lie at residues 1-26 (MPPKEDWEKYKAPLEDDDKKPDDDKI) and 108-140 (GNGESDETTTDNNNSGNSNSNSNQQSTDADEDD). Residues 117–134 (TDNNNSGNSNSNSNQQST) are compositionally biased toward low complexity. Phosphoserine occurs at positions 164 and 231. 250-257 (GPPGTGKT) serves as a coordination point for ATP.

Belongs to the AAA ATPase family. In terms of assembly, interacts with UBR1 and CIC1. The N-terminus is blocked.

The protein localises to the cytoplasm. It localises to the nucleus. Its function is as follows. The 26S proteasome is involved in the ATP-dependent degradation of ubiquitinated proteins. The regulatory (or ATPase) complex confers ATP dependency and substrate specificity to the 26S complex. This is 26S proteasome regulatory subunit 7 homolog (RPT1) from Saccharomyces cerevisiae (strain ATCC 204508 / S288c) (Baker's yeast).